Consider the following 974-residue polypeptide: Membrane-associated phosphatidylinositol transfer protein 3 (974 aa).

8 positions are modified to phosphoserine: Ser-30, Ser-31, Ser-109, Ser-295, Ser-298, Ser-321, Ser-343, and Ser-495. The tract at residues 284–304 is disordered; the sequence is GDSPASSSRKGSISSTQDTPV. Positions 292–302 are enriched in polar residues; that stretch reads RKGSISSTQDT. 2 disordered regions span residues 323 to 346 and 491 to 536; these read IDIS…SDSS and SSRD…SMAP. In terms of domain architecture, DDHD spans 390-594; the sequence is FDFDVSDFFL…VAFILRQVMR (205 aa). A compositionally biased stretch (low complexity) spans 520–533; sequence EGSSHSESSESSDS. Phosphoserine occurs at positions 612, 907, 928, and 946. The disordered stretch occupies residues 927 to 974; it reads MSVQQPDPPAANPKPERAQSQPESDKDHERPLPALSWARGPPKFESVP.

It belongs to the PtdIns transfer protein family. PI transfer class IIA subfamily. In terms of assembly, interacts with PTK2B via its C-terminus. Detected in brain and spleen, and at low levels in ovary.

It is found in the endomembrane system. In terms of biological role, catalyzes the transfer of phosphatidylinositol and phosphatidylcholine between membranes (in vitro). Binds calcium ions. The polypeptide is Membrane-associated phosphatidylinositol transfer protein 3 (PITPNM3) (Homo sapiens (Human)).